We begin with the raw amino-acid sequence, 339 residues long: Ketol-acid reductoisomerase (NADP(+)) (339 aa).

Residues 1–182 (MRVYYDRDAD…GGGRSGIIET (182 aa)) form the KARI N-terminal Rossmann domain. NADP(+) is bound by residues 24-27 (YGSQ), K48, S51, T53, and 83-86 (DELQ). Residue H108 is part of the active site. G134 lines the NADP(+) pocket. The 146-residue stretch at 183 to 328 (TFQEECETDL…AKLRGMMPWI (146 aa)) folds into the KARI C-terminal knotted domain. Mg(2+) is bound by residues D191, E195, E227, and E231. A substrate-binding site is contributed by S252.

This sequence belongs to the ketol-acid reductoisomerase family. Mg(2+) serves as cofactor.

It catalyses the reaction (2R)-2,3-dihydroxy-3-methylbutanoate + NADP(+) = (2S)-2-acetolactate + NADPH + H(+). The catalysed reaction is (2R,3R)-2,3-dihydroxy-3-methylpentanoate + NADP(+) = (S)-2-ethyl-2-hydroxy-3-oxobutanoate + NADPH + H(+). Its pathway is amino-acid biosynthesis; L-isoleucine biosynthesis; L-isoleucine from 2-oxobutanoate: step 2/4. The protein operates within amino-acid biosynthesis; L-valine biosynthesis; L-valine from pyruvate: step 2/4. Involved in the biosynthesis of branched-chain amino acids (BCAA). Catalyzes an alkyl-migration followed by a ketol-acid reduction of (S)-2-acetolactate (S2AL) to yield (R)-2,3-dihydroxy-isovalerate. In the isomerase reaction, S2AL is rearranged via a Mg-dependent methyl migration to produce 3-hydroxy-3-methyl-2-ketobutyrate (HMKB). In the reductase reaction, this 2-ketoacid undergoes a metal-dependent reduction by NADPH to yield (R)-2,3-dihydroxy-isovalerate. In Allorhizobium ampelinum (strain ATCC BAA-846 / DSM 112012 / S4) (Agrobacterium vitis (strain S4)), this protein is Ketol-acid reductoisomerase (NADP(+)).